Consider the following 100-residue polypeptide: MRLTPREIDKLLVVVAADLAYRRKERGLKLNYPESIAIITYEILEGARDGKNVAELMELGKNILSAEDVMDGIADMISDIQVEATFPDGTKLVTIHQPIH.

It belongs to the urease gamma subunit family. As to quaternary structure, heterotrimer of UreA (gamma), UreB (beta) and UreC (alpha) subunits. Three heterotrimers associate to form the active enzyme.

Its subcellular location is the cytoplasm. The enzyme catalyses urea + 2 H2O + H(+) = hydrogencarbonate + 2 NH4(+). The protein operates within nitrogen metabolism; urea degradation; CO(2) and NH(3) from urea (urease route): step 1/1. The chain is Urease subunit gamma from Bacillus cereus (strain ATCC 10987 / NRS 248).